The sequence spans 224 residues: UPF0758 protein ABO_0214 (224 aa).

The MPN domain occupies 102 to 224 (PLDNPDKAGQ…WVSLASRGAV (123 aa)). Residues H173, H175, and D186 each contribute to the Zn(2+) site. A JAMM motif motif is present at residues 173–186 (HNHPSGVAEPSQSD).

Belongs to the UPF0758 family.

The sequence is that of UPF0758 protein ABO_0214 from Alcanivorax borkumensis (strain ATCC 700651 / DSM 11573 / NCIMB 13689 / SK2).